The sequence spans 152 residues: Pseudo histidine-containing phosphotransfer protein 5 (152 aa).

One can recognise an HPt domain in the interval 38-140 (NPNFAEEVVS…ESYFQLLRQA (103 aa)).

Functions as a two-component phosphorelay mediator between cytokinin sensor histidine kinases and response regulators (B-type ARRs). Plays an important role in propagating cytokinin signal transduction. The polypeptide is Pseudo histidine-containing phosphotransfer protein 5 (Oryza sativa subsp. japonica (Rice)).